The sequence spans 389 residues: MDPNDAFSAAHPFRWDLGPPAPAPVPPPPPPPPPPPPANVPRELEELVAGYGVRMSTVARISELGFTASTLLAMTERELDDMMAALAGLFRWDLLLGERFGLRAALRAERGRLMSLGGRHHGHQSGSTVDGASQEVLSDEHDMAGSGGMGDDDNGRRMVTGKKQAKKGSAARKGKKARRKKVDDLRLDMQEDEMDCCDEDGGGGSESTESSAGGGGGERQREHPFVVTEPGEVARAKKNGLDYLFHLYEQCRLFLLQVQSMAKLHGHKSPTKVTNQVFRYAKKVGASYINKPKMRHYVHCYALHCLDEEASDALRRAYKARGENVGAWRQACYAPLVDISARHGFDIDAVFAAHPRLAIWYVPTRLRQLCHQARSSHAAAAAALPPPLF.

Disordered stretches follow at residues 1-41 (MDPN…ANVP) and 140-226 (EHDM…HPFV). A compositionally biased stretch (pro residues) spans 19–39 (PPAPAPVPPPPPPPPPPPPAN). The span at 159–180 (VTGKKQAKKGSAARKGKKARRK) shows a compositional bias: basic residues. The Nuclear localization signal motif lies at 161–168 (GKKQAKKG). The span at 190–201 (QEDEMDCCDEDG) shows a compositional bias: acidic residues. 3 DNA-binding regions span residues 221-225 (REHPF), 290-297 (NKPKMRHY), and 361-364 (YVPT).

It belongs to the FLO/LFY family. Interacts with APO1. As to expression, in very young panicle but not in mature florets, mature leaves, roots or apical meristems.

The protein localises to the nucleus. Functionally, probable transcription factor. Together with APO1, involved in the temporal regulation of meristem size and identity during both vegetative and reproductive developments through interaction with APO1. Promotes flowering. This chain is Probable transcription factor FL, found in Oryza sativa subsp. japonica (Rice).